The sequence spans 611 residues: DNA mismatch repair protein MutL (611 aa).

Belongs to the DNA mismatch repair MutL/HexB family.

Functionally, this protein is involved in the repair of mismatches in DNA. It is required for dam-dependent methyl-directed DNA mismatch repair. May act as a 'molecular matchmaker', a protein that promotes the formation of a stable complex between two or more DNA-binding proteins in an ATP-dependent manner without itself being part of a final effector complex. The chain is DNA mismatch repair protein MutL from Borrelia garinii subsp. bavariensis (strain ATCC BAA-2496 / DSM 23469 / PBi) (Borreliella bavariensis).